Here is a 1485-residue protein sequence, read N- to C-terminus: Chromosome partition protein MukB (1485 aa).

34-41 (GGNGAGKS) serves as a coordination point for ATP. 6 coiled-coil regions span residues 337–480 (LNLV…QAYQ), 509–605 (QHLA…PVWL), 780–805 (RAARENRLETLYQERDRLAERYATLS), 835–915 (EAEI…IQQH), 977–1116 (GMLT…AKAG), and 1210–1235 (EAIEQMEIELGRLTEELTAREQKLAI). Residues 666-783 (PSGAEDARLI…EVPLFGRAAR (118 aa)) form a flexible hinge region.

This sequence belongs to the SMC family. MukB subfamily. As to quaternary structure, homodimerization via its hinge domain. Binds to DNA via its C-terminal region. Interacts, and probably forms a ternary complex, with MukE and MukF via its C-terminal region. The complex formation is stimulated by calcium or magnesium. Interacts with tubulin-related protein FtsZ.

It is found in the cytoplasm. The protein resides in the nucleoid. Its function is as follows. Plays a central role in chromosome condensation, segregation and cell cycle progression. Functions as a homodimer, which is essential for chromosome partition. Involved in negative DNA supercoiling in vivo, and by this means organize and compact chromosomes. May achieve or facilitate chromosome segregation by condensation DNA from both sides of a centrally located replisome during cell division. This Yersinia pseudotuberculosis serotype O:1b (strain IP 31758) protein is Chromosome partition protein MukB.